Consider the following 169-residue polypeptide: MLRSEKPEVVEEIASIYKDSPSVIVAHYHGLTVSEVNSLRESLKSKDAGFKVVKNTLAKIAANKAGLDDIVSLFSGPTAIVYSKEPVEMAKLVVNFAKSNENLKIVGGIVDKQVLNEHSIKELSKLPSLNELRSKIVGLLQAPATKIAGVLQAPSSSLARVIQANASKN.

It belongs to the universal ribosomal protein uL10 family. As to quaternary structure, part of the ribosomal stalk of the 50S ribosomal subunit. The N-terminus interacts with L11 and the large rRNA to form the base of the stalk. The C-terminus forms an elongated spine to which L12 dimers bind in a sequential fashion forming a multimeric L10(L12)X complex.

In terms of biological role, forms part of the ribosomal stalk, playing a central role in the interaction of the ribosome with GTP-bound translation factors. The polypeptide is Large ribosomal subunit protein uL10 (Rickettsia bellii (strain OSU 85-389)).